We begin with the raw amino-acid sequence, 350 residues long: Hepatocyte nuclear factor 3-gamma (350 aa).

The segment at residues Ala116–Leu207 is a DNA-binding region (fork-head). A disordered region spans residues Glu217 to Pro276. The segment covering Ala226–Ser249 has biased composition (low complexity). The segment covering Pro250 to Glu259 has biased composition (pro residues).

In terms of assembly, interacts with FOXA2. As to expression, expressed in erythroleukemia and hepatoma cell lines and in liver and pancreas. Not expressed in any other cell lines or tissues examined.

The protein resides in the nucleus. Functionally, transcription factor that is thought to act as a 'pioneer' factor opening the compacted chromatin for other proteins through interactions with nucleosomal core histones and thereby replacing linker histones at target enhancer and/or promoter sites. Originally described as a transcription activator for a number of liver genes such as AFP, albumin, tyrosine aminotransferase, PEPCK, etc. Interacts with the cis-acting regulatory regions of these genes. Involved in glucose homeostasis; binds to and activates transcription from the G6PC1 promoter. Binds to the CYP3A4 promoter and activates its transcription in cooperation with CEBPA. Binds to the CYP3A7 promoter together with members of the CTF/NF-I family. Involved in regulation of neuronal-specific transcription. May be involved in regulation of spermatogenesis. The polypeptide is Hepatocyte nuclear factor 3-gamma (FOXA3) (Homo sapiens (Human)).